The following is a 193-amino-acid chain: Crossover junction endodeoxyribonuclease RuvC (193 aa).

Catalysis depends on residues aspartate 7, glutamate 68, and aspartate 141. Mg(2+) is bound by residues aspartate 7, glutamate 68, and aspartate 141. Residues 174 to 193 form a disordered region; the sequence is RQWAQATQHATRRRGVRRGM. Over residues 183–193 the composition is skewed to basic residues; it reads ATRRRGVRRGM.

It belongs to the RuvC family. In terms of assembly, homodimer which binds Holliday junction (HJ) DNA. The HJ becomes 2-fold symmetrical on binding to RuvC with unstacked arms; it has a different conformation from HJ DNA in complex with RuvA. In the full resolvosome a probable DNA-RuvA(4)-RuvB(12)-RuvC(2) complex forms which resolves the HJ. Mg(2+) is required as a cofactor.

Its subcellular location is the cytoplasm. It carries out the reaction Endonucleolytic cleavage at a junction such as a reciprocal single-stranded crossover between two homologous DNA duplexes (Holliday junction).. Functionally, the RuvA-RuvB-RuvC complex processes Holliday junction (HJ) DNA during genetic recombination and DNA repair. Endonuclease that resolves HJ intermediates. Cleaves cruciform DNA by making single-stranded nicks across the HJ at symmetrical positions within the homologous arms, yielding a 5'-phosphate and a 3'-hydroxyl group; requires a central core of homology in the junction. The consensus cleavage sequence is 5'-(A/T)TT(C/G)-3'. Cleavage occurs on the 3'-side of the TT dinucleotide at the point of strand exchange. HJ branch migration catalyzed by RuvA-RuvB allows RuvC to scan DNA until it finds its consensus sequence, where it cleaves and resolves the cruciform DNA. The polypeptide is Crossover junction endodeoxyribonuclease RuvC (Bifidobacterium animalis subsp. lactis (strain AD011)).